Consider the following 87-residue polypeptide: Phosphoribosyl-ATP pyrophosphatase (87 aa).

This sequence belongs to the PRA-PH family.

Its subcellular location is the cytoplasm. The enzyme catalyses 1-(5-phospho-beta-D-ribosyl)-ATP + H2O = 1-(5-phospho-beta-D-ribosyl)-5'-AMP + diphosphate + H(+). It participates in amino-acid biosynthesis; L-histidine biosynthesis; L-histidine from 5-phospho-alpha-D-ribose 1-diphosphate: step 2/9. The sequence is that of Phosphoribosyl-ATP pyrophosphatase from Nocardioides sp. (strain ATCC BAA-499 / JS614).